Consider the following 229-residue polypeptide: Small ribosomal subunit protein uS5 (229 aa).

One can recognise an S5 DRBM domain in the interval 61–124 (LEEQVLDVKL…AHAKLSLIKV (64 aa)).

This sequence belongs to the universal ribosomal protein uS5 family. In terms of assembly, part of the 30S ribosomal subunit. Contacts protein S4.

In terms of biological role, with S4 and S12 plays an important role in translational accuracy. This Methanococcus maripaludis (strain C6 / ATCC BAA-1332) protein is Small ribosomal subunit protein uS5.